The sequence spans 124 residues: Seripauperin-3 (124 aa).

Residues 7–24 traverse the membrane as a helical segment; that stretch reads IAAGVAAIAAGIAAAPAT.

The protein belongs to the SRP1/TIP1 family. Seripauperin subfamily.

It is found in the membrane. This chain is Seripauperin-3 (PAU3), found in Saccharomyces cerevisiae (strain ATCC 204508 / S288c) (Baker's yeast).